Here is a 140-residue protein sequence, read N- to C-terminus: Nucleoside diphosphate kinase (140 aa).

6 residues coordinate ATP: K11, F59, R87, T93, R104, and N114. Catalysis depends on H117, which acts as the Pros-phosphohistidine intermediate.

Belongs to the NDK family. Homotetramer. The cofactor is Mg(2+).

The protein resides in the cytoplasm. It catalyses the reaction a 2'-deoxyribonucleoside 5'-diphosphate + ATP = a 2'-deoxyribonucleoside 5'-triphosphate + ADP. It carries out the reaction a ribonucleoside 5'-diphosphate + ATP = a ribonucleoside 5'-triphosphate + ADP. In terms of biological role, major role in the synthesis of nucleoside triphosphates other than ATP. The ATP gamma phosphate is transferred to the NDP beta phosphate via a ping-pong mechanism, using a phosphorylated active-site intermediate. The protein is Nucleoside diphosphate kinase of Rickettsia bellii (strain OSU 85-389).